Reading from the N-terminus, the 189-residue chain is Elongation factor P (189 aa).

The protein belongs to the elongation factor P family.

The protein resides in the cytoplasm. Its pathway is protein biosynthesis; polypeptide chain elongation. Functionally, involved in peptide bond synthesis. Stimulates efficient translation and peptide-bond synthesis on native or reconstituted 70S ribosomes in vitro. Probably functions indirectly by altering the affinity of the ribosome for aminoacyl-tRNA, thus increasing their reactivity as acceptors for peptidyl transferase. The sequence is that of Elongation factor P from Pseudomonas entomophila (strain L48).